The chain runs to 426 residues: Histone-binding protein RBBP7 (426 aa).

WD repeat units follow at residues 47–123 (QWLP…KINH), 129–174 (RARY…LRLR), 182–218 (GLSW…KIVD), 229–270 (VVED…HSVD), 276–313 (VNCL…LHSF), 319–370 (EIFQ…LFIH), and 377–404 (ISDF…VWQM).

It belongs to the WD repeat RBAP46/RBAP48/MSI1 family. In terms of assembly, binds directly to helix 1 of the histone fold of histone H4, a region that is not accessible when H4 is in chromatin.

The protein resides in the nucleus. Its function is as follows. Core histone-binding subunit that may target chromatin remodeling factors, histone acetyltransferases and histone deacetylases to their histone substrates in a manner that is regulated by nucleosomal DNA. Component of several complexes which regulate chromatin metabolism. This Danio rerio (Zebrafish) protein is Histone-binding protein RBBP7 (rbbp7).